We begin with the raw amino-acid sequence, 606 residues long: Pickpocket protein 28 (606 aa).

The segment at 1-26 is disordered; the sequence is MRTLTESRRRQSGSSGCKKDSESDDD. Transmembrane regions (helical) follow at residues 66-86 and 490-510; these read IFFG…ISNV and GLLG…FFYI.

Belongs to the amiloride-sensitive sodium channel (TC 1.A.6) family. In terms of tissue distribution, expressed in water-sensing neurons in taste bristles on the proboscis but not in carbonation-sensing taste peg neurons (at protein level). Expressed in the tracheal system.

The protein localises to the cell membrane. In terms of biological role, osmosensitive ion channel that mediates the cellular and behavioral response to water. Plays an essential role in gustatory water reception. Part of a complex that plays a role in tracheal liquid clearance. Probable role in sodium transport. The chain is Pickpocket protein 28 (ppk28) from Drosophila melanogaster (Fruit fly).